A 130-amino-acid polypeptide reads, in one-letter code: Small ribosomal subunit protein uS9 (130 aa).

This sequence belongs to the universal ribosomal protein uS9 family.

This Polaromonas sp. (strain JS666 / ATCC BAA-500) protein is Small ribosomal subunit protein uS9.